The primary structure comprises 1137 residues: DNA-directed RNA polymerase III subunit RPC2 (1137 aa).

The C4-type zinc-finger motif lies at aspartate 1084–histidine 1099. Positions 1086, 1089, 1098, and 1101 each coordinate Zn(2+).

It belongs to the RNA polymerase beta chain family. In terms of assembly, component of the RNA polymerase III (Pol III) complex consisting of 17 subunits.

Its subcellular location is the nucleus. The catalysed reaction is RNA(n) + a ribonucleoside 5'-triphosphate = RNA(n+1) + diphosphate. Its function is as follows. DNA-dependent RNA polymerase catalyzes the transcription of DNA into RNA using the four ribonucleoside triphosphates as substrates. Second largest core component of RNA polymerase III which synthesizes small RNAs, such as 5S rRNA and tRNAs. Proposed to contribute to the polymerase catalytic activity and forms the polymerase active center together with the largest subunit. Pol III is composed of mobile elements and Polr3B is part of the core element with the central large cleft and probably a clamp element that moves to open and close the cleft. In Drosophila melanogaster (Fruit fly), this protein is DNA-directed RNA polymerase III subunit RPC2.